Consider the following 276-residue polypeptide: A-factor receptor protein (276 aa).

The 61-residue stretch at 8 to 68 (VQTWRSIVDA…AIMDEQTSTV (61 aa)) folds into the HTH tetR-type domain. The segment at residues 31–50 (AISEILRRAKVTKGALYFHF) is a DNA-binding region (H-T-H motif). Over residues 207 to 220 (EKAEREEQEARIAA) the composition is skewed to basic and acidic residues. Positions 207-276 (EKAEREEQEA…AGVAAGGVVA (70 aa)) are disordered. Low complexity predominate over residues 221–235 (EAKGAGSDAATDSGS). The span at 236–257 (RSGGSGLRGGGSGRGPRAGGAG) shows a compositional bias: gly residues.

As to quaternary structure, homodimer or multimer. Binds to both DNA and A-factor as a homodimer.

It localises to the cytoplasm. Its function is as follows. Represses adpA expression by binding to the promoter region in the absence of A-factor, causing repression of streptomycin production and of sporulation. This is A-factor receptor protein (arpA) from Streptomyces griseus.